The sequence spans 324 residues: MYG1 protein C694.04c (324 aa).

The protein belongs to the MYG1 family.

The protein is MYG1 protein C694.04c of Schizosaccharomyces pombe (strain 972 / ATCC 24843) (Fission yeast).